The chain runs to 505 residues: Maturase K (505 aa).

The protein belongs to the intron maturase 2 family. MatK subfamily.

The protein localises to the plastid. Its subcellular location is the chloroplast. Functionally, usually encoded in the trnK tRNA gene intron. Probably assists in splicing its own and other chloroplast group II introns. This chain is Maturase K, found in Sciadopitys verticillata (Japanese umbrella-pine).